Here is a 283-residue protein sequence, read N- to C-terminus: ATP synthase gamma chain (283 aa).

The protein belongs to the ATPase gamma chain family. F-type ATPases have 2 components, CF(1) - the catalytic core - and CF(0) - the membrane proton channel. CF(1) has five subunits: alpha(3), beta(3), gamma(1), delta(1), epsilon(1). CF(0) has three main subunits: a, b and c.

The protein resides in the cell membrane. In terms of biological role, produces ATP from ADP in the presence of a proton gradient across the membrane. The gamma chain is believed to be important in regulating ATPase activity and the flow of protons through the CF(0) complex. The sequence is that of ATP synthase gamma chain from Desulforamulus reducens (strain ATCC BAA-1160 / DSM 100696 / MI-1) (Desulfotomaculum reducens).